We begin with the raw amino-acid sequence, 377 residues long: tRNA-queuosine alpha-mannosyltransferase (377 aa).

This sequence belongs to the glycosyltransferase group 1 family. Glycosyltransferase 4 subfamily.

It carries out the reaction queuosine(34) in tRNA(Asp) + GDP-alpha-D-mannose = O-4''-alpha-D-mannosylqueuosine(34) in tRNA(Asp) + GDP + H(+). Its function is as follows. Glycosyltransferase that specifically catalyzes mannosylation of cytoplasmic tRNA(Asp) modified with queuosine at position 34 (queuosine(34)). Mannosylates the cyclopentene moiety of queuosine(34) in tRNA(Asp) to form mannosyl-queuosine(34). The sequence is that of tRNA-queuosine alpha-mannosyltransferase from Drosophila melanogaster (Fruit fly).